We begin with the raw amino-acid sequence, 260 residues long: Cystine transporter (260 aa).

The PQ-loop 1 domain occupies 1-67 (MVSLDDILGI…QLYCWKMTGD (67 aa)). Transmembrane regions (helical) follow at residues 7 to 28 (ILGI…ITNW), 40 to 62 (FVML…LYCW), 81 to 102 (FWYC…VAGA), 118 to 138 (WYLR…VQFM), and 151 to 175 (TLAY…PQVT). The PQ-loop 2 domain maps to 162 to 212 (KISMSLIKYIPQVTHNSTRKSMDCFPIQGVFLDVTGGIASLLQLIWQLSND). A glycan (N-linked (GlcNAc...) asparagine) is linked at Asn-177. Helical transmembrane passes span 185 to 205 (CFPI…LLQL) and 227 to 247 (VGLS…WFVY).

This sequence belongs to the cystinosin family.

It is found in the endosome membrane. Its subcellular location is the vacuole membrane. It carries out the reaction L-cystine(out) + H(+)(out) = L-cystine(in) + H(+)(in). Functionally, cystine/H(+) symporter that mediates export of cystine, the oxidized dimer of cysteine, from vacuoles/endodomes. The protein is Cystine transporter (ERS1) of Saccharomyces cerevisiae (strain ATCC 204508 / S288c) (Baker's yeast).